Reading from the N-terminus, the 235-residue chain is Ribonuclease PH (235 aa).

Phosphate-binding positions include Arg-86 and 124–126; that span reads GTR.

It belongs to the RNase PH family. As to quaternary structure, homohexameric ring arranged as a trimer of dimers.

The catalysed reaction is tRNA(n+1) + phosphate = tRNA(n) + a ribonucleoside 5'-diphosphate. In terms of biological role, phosphorolytic 3'-5' exoribonuclease that plays an important role in tRNA 3'-end maturation. Removes nucleotide residues following the 3'-CCA terminus of tRNAs; can also add nucleotides to the ends of RNA molecules by using nucleoside diphosphates as substrates, but this may not be physiologically important. Probably plays a role in initiation of 16S rRNA degradation (leading to ribosome degradation) during starvation. This chain is Ribonuclease PH, found in Francisella philomiragia subsp. philomiragia (strain ATCC 25017 / CCUG 19701 / FSC 153 / O#319-036).